Here is a 254-residue protein sequence, read N- to C-terminus: Alcohol dehydrogenase (254 aa).

10 to 33 (FVAGLGGIGLDTSRELVKRDLKNL) lines the NAD(+) pocket. Ser-138 is a substrate binding site. Tyr-151 acts as the Proton acceptor in catalysis.

It belongs to the short-chain dehydrogenases/reductases (SDR) family. In terms of assembly, homodimer.

It catalyses the reaction a primary alcohol + NAD(+) = an aldehyde + NADH + H(+). The enzyme catalyses a secondary alcohol + NAD(+) = a ketone + NADH + H(+). The chain is Alcohol dehydrogenase (Adh) from Drosophila guanche (Fruit fly).